The chain runs to 337 residues: Adenosine deaminase (337 aa).

Residues H15 and H17 each coordinate Zn(2+). Substrate contacts are provided by H17, D19, and G172. Residue H199 coordinates Zn(2+). E202 acts as the Proton donor in catalysis. D279 is a binding site for Zn(2+).

Belongs to the metallo-dependent hydrolases superfamily. Adenosine and AMP deaminases family. Adenosine deaminase subfamily. Zn(2+) serves as cofactor.

It carries out the reaction adenosine + H2O + H(+) = inosine + NH4(+). It catalyses the reaction 2'-deoxyadenosine + H2O + H(+) = 2'-deoxyinosine + NH4(+). Its function is as follows. Catalyzes the hydrolytic deamination of adenosine and 2-deoxyadenosine. This Enterococcus faecalis (strain ATCC 700802 / V583) protein is Adenosine deaminase.